A 1427-amino-acid polypeptide reads, in one-letter code: Coiled-coil domain-containing protein 144A (1427 aa).

The span at 1 to 11 (MASWGGEKRGG) shows a compositional bias: basic and acidic residues. Disordered regions lie at residues 1–32 (MASW…VGSQ), 87–189 (AARS…LTER), 213–261 (LPEN…CDRE), 453–485 (NMNQ…DSDR), and 528–586 (EEEM…EVKN). 2 stretches are compositionally biased toward polar residues: residues 129–150 (PESL…LSDE) and 167–178 (VSPSMPENQSAT). The span at 224–234 (QDSELTSEEEQ) shows a compositional bias: acidic residues. Positions 453–467 (NMNQNSDSGSTNNYK) are enriched in polar residues. A coiled-coil region spans residues 490 to 545 (YLHEELQQDMQKFKNEVNTLEEEFLALKKEDVQLHKDVEEEMEKHRSNSTELSGTL). Positions 528–537 (EEEMEKHRSN) are enriched in basic and acidic residues. A compositionally biased stretch (low complexity) spans 543–552 (GTLTDGTTVG). The segment covering 563–584 (PRKENGEHDRPADKTSNEKNEV) has biased composition (basic and acidic residues). 2 coiled-coil regions span residues 648–1129 (LLKL…DLTE) and 1155–1309 (FSMK…TQLT).

The protein belongs to the CCDC144 family.

Its function is as follows. May play a role in preventing the formation of kidney stones through inhibition of calcium oxalate monohydrate (COM) crystallization, attenuating COM-induced apoptotic injury to renal epithelial cells. May exhibit antilithiatic (preventing the formation of kidney stones) activity through crystal binding, hindering the crystal attachment to renal epithelial cells, a pre-requisite to initiate inflammatory response. The chain is Coiled-coil domain-containing protein 144A (CCDC144A) from Homo sapiens (Human).